A 217-amino-acid polypeptide reads, in one-letter code: tRNA (guanine-N(7)-)-methyltransferase (217 aa).

S-adenosyl-L-methionine contacts are provided by E44, E69, D96, and D118. D118 is a catalytic residue. Residues K122, D154, and 191–194 (TEYE) contribute to the substrate site.

Belongs to the class I-like SAM-binding methyltransferase superfamily. TrmB family.

It carries out the reaction guanosine(46) in tRNA + S-adenosyl-L-methionine = N(7)-methylguanosine(46) in tRNA + S-adenosyl-L-homocysteine. The protein operates within tRNA modification; N(7)-methylguanine-tRNA biosynthesis. Catalyzes the formation of N(7)-methylguanine at position 46 (m7G46) in tRNA. The sequence is that of tRNA (guanine-N(7)-)-methyltransferase from Bacillus mycoides (strain KBAB4) (Bacillus weihenstephanensis).